A 238-amino-acid chain; its full sequence is MPLVKAPKKAEPIWKEWDAKAQKAGLRHSVYSVNGDEYTGEWLNNLRHGKGTYMWKRRKSIYEGDWKCGERSGFGTYSVQDSNTGEYIKVYSGYWDNDKKHGYGTHFYSAKEYYEGEWKCGKRCGWGRMYFANGDIYEGEWLEDKHSGQGMLCLANENRYEGSWKDGKKHGPGKFYYLNKGQLYEGVWVEDIPKCGTMVDFGRTEAPYPTKYPLPEVKVADPEGVLKEAQQPLFGEHE.

7 MORN repeats span residues 38–60 (YTGEWLNNLRHGKGTYMWKRRKS), 62–84 (YEGDWKCGERSGFGTYSVQDSNT), 91–113 (YSGYWDNDKKHGYGTHFYSAKEY), 114–136 (YEGEWKCGKRCGWGRMYFANGDI), 137–159 (YEGEWLEDKHSGQGMLCLANENR), 160–182 (YEGSWKDGKKHGPGKFYYLNKGQ), and 184–205 (YEGVWVEDIPKCGTMVDFGRTE).

It localises to the cytoplasmic vesicle. The protein resides in the secretory vesicle. The protein localises to the acrosome. Functionally, assembles a suppression complex (suppresome) by tethering SIRT1 and MDM2 to regulate composite modifications of p53/TP53. Confers both deacetylation-mediated functional inactivation, by SIRT1, and ubiquitination-dependent degradation, by MDM2, of p53/TP53, promoting a proliferative and cell survival behaviors. May play a role in the regulation of spermatogenesis. This is MORN repeat-containing protein 3 (morn3) from Xenopus laevis (African clawed frog).